A 152-amino-acid polypeptide reads, in one-letter code: Deoxyuridine 5'-triphosphate nucleotidohydrolase (152 aa).

Substrate-binding positions include 71 to 73 (RSG), Asn-84, 88 to 90 (LID), and Met-98.

It belongs to the dUTPase family. The cofactor is Mg(2+).

The catalysed reaction is dUTP + H2O = dUMP + diphosphate + H(+). It participates in pyrimidine metabolism; dUMP biosynthesis; dUMP from dCTP (dUTP route): step 2/2. Functionally, this enzyme is involved in nucleotide metabolism: it produces dUMP, the immediate precursor of thymidine nucleotides and it decreases the intracellular concentration of dUTP so that uracil cannot be incorporated into DNA. The polypeptide is Deoxyuridine 5'-triphosphate nucleotidohydrolase (Haemophilus ducreyi (strain 35000HP / ATCC 700724)).